The primary structure comprises 570 residues: Formate--tetrahydrofolate ligase (570 aa).

65 to 72 (TPFGEGKT) contacts ATP.

Belongs to the formate--tetrahydrofolate ligase family.

The enzyme catalyses (6S)-5,6,7,8-tetrahydrofolate + formate + ATP = (6R)-10-formyltetrahydrofolate + ADP + phosphate. The protein operates within one-carbon metabolism; tetrahydrofolate interconversion. The chain is Formate--tetrahydrofolate ligase from Shewanella woodyi (strain ATCC 51908 / MS32).